The following is a 471-amino-acid chain: BPI fold-containing family B member 1 (471 aa).

Residues 1–18 form the signal peptide; that stretch reads MTNPWIVSLLLGATLVQA. N-linked (GlcNAc...) asparagine glycans are attached at residues Asn150, Asn157, Asn260, and Asn397. Cys154 and Cys197 are joined by a disulfide.

Belongs to the BPI/LBP/Plunc superfamily. Plunc family.

The protein resides in the secreted. Its function is as follows. May play a role in innate immunity in mouth, nose and lungs. Binds bacterial lipopolysaccharide (LPS) and modulates the cellular responses to LPS. In Rattus norvegicus (Rat), this protein is BPI fold-containing family B member 1 (Bpifb1).